We begin with the raw amino-acid sequence, 98 residues long: Small ribosomal subunit protein bS21B (98 aa).

The segment at 61 to 98 (KLQREGLLPMKPKPVFGAGAGGERGGRGGPGAGPRGPR) is disordered. Positions 78 to 98 (AGAGGERGGRGGPGAGPRGPR) are enriched in gly residues.

Belongs to the bacterial ribosomal protein bS21 family.

This is Small ribosomal subunit protein bS21B from Bradyrhizobium diazoefficiens (strain JCM 10833 / BCRC 13528 / IAM 13628 / NBRC 14792 / USDA 110).